Here is a 377-residue protein sequence, read N- to C-terminus: Succinyl-diaminopimelate desuccinylase (377 aa).

Position 67 (histidine 67) interacts with Zn(2+). The active site involves aspartate 69. Aspartate 100 contributes to the Zn(2+) binding site. Glutamate 134 functions as the Proton acceptor in the catalytic mechanism. Residues glutamate 135, glutamate 163, and histidine 349 each coordinate Zn(2+).

This sequence belongs to the peptidase M20A family. DapE subfamily. In terms of assembly, homodimer. Requires Zn(2+) as cofactor. Co(2+) is required as a cofactor.

The catalysed reaction is N-succinyl-(2S,6S)-2,6-diaminopimelate + H2O = (2S,6S)-2,6-diaminopimelate + succinate. Its pathway is amino-acid biosynthesis; L-lysine biosynthesis via DAP pathway; LL-2,6-diaminopimelate from (S)-tetrahydrodipicolinate (succinylase route): step 3/3. Functionally, catalyzes the hydrolysis of N-succinyl-L,L-diaminopimelic acid (SDAP), forming succinate and LL-2,6-diaminopimelate (DAP), an intermediate involved in the bacterial biosynthesis of lysine and meso-diaminopimelic acid, an essential component of bacterial cell walls. This chain is Succinyl-diaminopimelate desuccinylase, found in Haemophilus influenzae (strain PittEE).